The sequence spans 239 residues: DNA repair protein RecO (239 aa).

Belongs to the RecO family.

In terms of biological role, involved in DNA repair and RecF pathway recombination. This chain is DNA repair protein RecO, found in Bifidobacterium animalis subsp. lactis (strain AD011).